The chain runs to 75 residues: Small ribosomal subunit protein bS18 (75 aa).

Residues 1 to 11 (MAAKPFFRRRK) show a composition bias toward basic residues. Residues 1 to 21 (MAAKPFFRRRKTDPFEGENAP) form a disordered region.

This sequence belongs to the bacterial ribosomal protein bS18 family. As to quaternary structure, part of the 30S ribosomal subunit. Forms a tight heterodimer with protein bS6.

Binds as a heterodimer with protein bS6 to the central domain of the 16S rRNA, where it helps stabilize the platform of the 30S subunit. The sequence is that of Small ribosomal subunit protein bS18 from Jannaschia sp. (strain CCS1).